Reading from the N-terminus, the 132-residue chain is S-adenosylmethionine decarboxylase proenzyme (132 aa).

S65 serves as the catalytic Schiff-base intermediate with substrate; via pyruvic acid. At S65 the chain carries Pyruvic acid (Ser); by autocatalysis. H70 serves as the catalytic Proton acceptor; for processing activity. C85 serves as the catalytic Proton donor; for catalytic activity.

It belongs to the prokaryotic AdoMetDC family. Type 1 subfamily. Heterotetramer of two alpha and two beta chains arranged as a dimer of alpha/beta heterodimers. Pyruvate serves as cofactor. Post-translationally, is synthesized initially as an inactive proenzyme. Formation of the active enzyme involves a self-maturation process in which the active site pyruvoyl group is generated from an internal serine residue via an autocatalytic post-translational modification. Two non-identical subunits are generated from the proenzyme in this reaction, and the pyruvate is formed at the N-terminus of the alpha chain, which is derived from the carboxyl end of the proenzyme. The post-translation cleavage follows an unusual pathway, termed non-hydrolytic serinolysis, in which the side chain hydroxyl group of the serine supplies its oxygen atom to form the C-terminus of the beta chain, while the remainder of the serine residue undergoes an oxidative deamination to produce ammonia and the pyruvoyl group blocking the N-terminus of the alpha chain.

The enzyme catalyses S-adenosyl-L-methionine + H(+) = S-adenosyl 3-(methylsulfanyl)propylamine + CO2. It participates in amine and polyamine biosynthesis; S-adenosylmethioninamine biosynthesis; S-adenosylmethioninamine from S-adenosyl-L-methionine: step 1/1. Catalyzes the decarboxylation of S-adenosylmethionine to S-adenosylmethioninamine (dcAdoMet), the propylamine donor required for the synthesis of the polyamines spermine and spermidine from the diamine putrescine. The protein is S-adenosylmethionine decarboxylase proenzyme of Symbiobacterium thermophilum (strain DSM 24528 / JCM 14929 / IAM 14863 / T).